Reading from the N-terminus, the 210-residue chain is Ribosomal RNA large subunit methyltransferase E (210 aa).

S-adenosyl-L-methionine-binding residues include glycine 61, tryptophan 63, aspartate 81, aspartate 97, and aspartate 122. The Proton acceptor role is filled by lysine 162. Basic and acidic residues predominate over residues 187 to 196; that stretch reads KPEASRKRSP. A disordered region spans residues 187-210; that stretch reads KPEASRKRSPEVYALGQGKRAHMK.

The protein belongs to the class I-like SAM-binding methyltransferase superfamily. RNA methyltransferase RlmE family.

The protein resides in the cytoplasm. The catalysed reaction is uridine(2552) in 23S rRNA + S-adenosyl-L-methionine = 2'-O-methyluridine(2552) in 23S rRNA + S-adenosyl-L-homocysteine + H(+). Specifically methylates the uridine in position 2552 of 23S rRNA at the 2'-O position of the ribose in the fully assembled 50S ribosomal subunit. The chain is Ribosomal RNA large subunit methyltransferase E from Stenotrophomonas maltophilia (strain K279a).